Consider the following 178-residue polypeptide: tRNA (cytidine(56)-2'-O)-methyltransferase (178 aa).

L88 is an S-adenosyl-L-methionine binding site.

Belongs to the aTrm56 family. As to quaternary structure, homodimer.

Its subcellular location is the cytoplasm. It catalyses the reaction cytidine(56) in tRNA + S-adenosyl-L-methionine = 2'-O-methylcytidine(56) in tRNA + S-adenosyl-L-homocysteine + H(+). Its function is as follows. Specifically catalyzes the AdoMet-dependent 2'-O-ribose methylation of cytidine at position 56 in tRNAs. This Methanopyrus kandleri (strain AV19 / DSM 6324 / JCM 9639 / NBRC 100938) protein is tRNA (cytidine(56)-2'-O)-methyltransferase.